Consider the following 556-residue polypeptide: Man(5)GlcNAc(2)-PP-dolichol translocation protein RFT1 (556 aa).

The next 12 helical transmembrane spans lie at 10–30 (LLGAGFSIIFQILCRILTFGI), 41–61 (EVLGIMNVRLLLLESTLLFLS), 91–111 (LTVPICAVLCAPCLYIWLNWL), 129–149 (VAFSCVLELMAESAVFVAQVF), 156–176 (ILLNTLHILVRSAIFLWIVTG), 184–204 (AFAIAQLSSAVTIVLGQYGFF), 353–373 (SVLNNLLLGVSSIGLIAFTFG), 389–409 (FVAGGLPQSLLQWHCLAIYLL), 440–460 (VSFLVLSYILTGIFGPVGFIF), 461–477 (ANCINMLSRILYSTYYI), 489–509 (LLGLWPGKLFGCTLFLAGIVC), and 517–537 (LATHLGVGVLAGLACLLSWAL).

Belongs to the RFT1 family.

It is found in the endoplasmic reticulum membrane. The protein operates within protein modification; protein glycosylation. Intramembrane glycolipid transporter that operates in the biosynthetic pathway of dolichol-linked oligosaccharides, the glycan precursors employed in protein asparagine (N)-glycosylation. The sequential addition of sugars to dolichol pyrophosphate produces dolichol-linked oligosaccharides containing fourteen sugars, including two GlcNAcs, nine mannoses and three glucoses. Once assembled, the oligosaccharide is transferred from the lipid to nascent proteins by oligosaccharyltransferases. The assembly of dolichol-linked oligosaccharides begins on the cytosolic side of the endoplasmic reticulum membrane and finishes in its lumen. RFT1 could mediate the translocation of the cytosolically oriented intermediate DolPP-GlcNAc2Man5, produced by ALG11, into the ER lumen where dolichol-linked oligosaccharides assembly continues. However, the intramembrane lipid transporter activity could not be confirmed in vitro. In Drosophila melanogaster (Fruit fly), this protein is Man(5)GlcNAc(2)-PP-dolichol translocation protein RFT1.